The sequence spans 322 residues: Manganese-dependent ADP-ribose/CDP-alcohol diphosphatase (322 aa).

Zn(2+) contacts are provided by D13, Q15, D60, N96, H228, H265, and H267.

This sequence belongs to the ADPRibase-Mn family. As to quaternary structure, monomer. Mg(2+) is required as a cofactor.

The catalysed reaction is CDP-choline + H2O = phosphocholine + CMP + 2 H(+). It carries out the reaction ADP-D-ribose + H2O = D-ribose 5-phosphate + AMP + 2 H(+). The enzyme catalyses CDP-glycerol + H2O = sn-glycerol 3-phosphate + CMP + 2 H(+). Hydrolyzes ADP-ribose, IDP-ribose, CDP-glycerol, CDP-choline and CDP-ethanolamine, but not other non-reducing ADP-sugars or CDP-glucose. This chain is Manganese-dependent ADP-ribose/CDP-alcohol diphosphatase (adprm), found in Danio rerio (Zebrafish).